Here is a 543-residue protein sequence, read N- to C-terminus: 2-succinyl-5-enolpyruvyl-6-hydroxy-3-cyclohexene-1-carboxylate synthase (543 aa).

This sequence belongs to the TPP enzyme family. MenD subfamily. As to quaternary structure, homodimer. Mg(2+) serves as cofactor. The cofactor is Mn(2+). It depends on thiamine diphosphate as a cofactor.

The enzyme catalyses isochorismate + 2-oxoglutarate + H(+) = 5-enolpyruvoyl-6-hydroxy-2-succinyl-cyclohex-3-ene-1-carboxylate + CO2. The protein operates within quinol/quinone metabolism; 1,4-dihydroxy-2-naphthoate biosynthesis; 1,4-dihydroxy-2-naphthoate from chorismate: step 2/7. Its pathway is quinol/quinone metabolism; menaquinone biosynthesis. Its function is as follows. Catalyzes the thiamine diphosphate-dependent decarboxylation of 2-oxoglutarate and the subsequent addition of the resulting succinic semialdehyde-thiamine pyrophosphate anion to isochorismate to yield 2-succinyl-5-enolpyruvyl-6-hydroxy-3-cyclohexene-1-carboxylate (SEPHCHC). This is 2-succinyl-5-enolpyruvyl-6-hydroxy-3-cyclohexene-1-carboxylate synthase from Corynebacterium glutamicum (strain R).